Reading from the N-terminus, the 200-residue chain is Holliday junction branch migration complex subunit RuvA (200 aa).

Positions 1–64 are domain I; it reads MIGHLRGIIV…EDAHTLYGFH (64 aa). Positions 65–143 are domain II; sequence NDHERRLFRA…RWHTNDTPSP (79 aa). The tract at residues 144–148 is flexible linker; that stretch reads EGLRS. A domain III region spans residues 149–200; that stretch reads SNTQPTQDAISALMALGYKPQEAKRAIDAIQKPDLSAETLIRLALKQMVLGT.

This sequence belongs to the RuvA family. As to quaternary structure, homotetramer. Forms an RuvA(8)-RuvB(12)-Holliday junction (HJ) complex. HJ DNA is sandwiched between 2 RuvA tetramers; dsDNA enters through RuvA and exits via RuvB. An RuvB hexamer assembles on each DNA strand where it exits the tetramer. Each RuvB hexamer is contacted by two RuvA subunits (via domain III) on 2 adjacent RuvB subunits; this complex drives branch migration. In the full resolvosome a probable DNA-RuvA(4)-RuvB(12)-RuvC(2) complex forms which resolves the HJ.

The protein localises to the cytoplasm. Functionally, the RuvA-RuvB-RuvC complex processes Holliday junction (HJ) DNA during genetic recombination and DNA repair, while the RuvA-RuvB complex plays an important role in the rescue of blocked DNA replication forks via replication fork reversal (RFR). RuvA specifically binds to HJ cruciform DNA, conferring on it an open structure. The RuvB hexamer acts as an ATP-dependent pump, pulling dsDNA into and through the RuvAB complex. HJ branch migration allows RuvC to scan DNA until it finds its consensus sequence, where it cleaves and resolves the cruciform DNA. The sequence is that of Holliday junction branch migration complex subunit RuvA from Coxiella burnetii (strain CbuG_Q212) (Coxiella burnetii (strain Q212)).